We begin with the raw amino-acid sequence, 334 residues long: Oligopeptide transport ATP-binding protein OppF (334 aa).

The 254-residue stretch at 12 to 265 folds into the ABC transporter domain; that stretch reads LEIADLKVHF…PLHPYTRALM (254 aa). 57–64 serves as a coordination point for ATP; the sequence is GESGCGKS.

The protein belongs to the ABC transporter superfamily. As to quaternary structure, the complex is composed of two ATP-binding proteins (OppD and OppF), two transmembrane proteins (OppB and OppC) and a solute-binding protein (OppA or MppA).

It is found in the cell inner membrane. It catalyses the reaction a [peptide](out) + ATP + H2O = a [peptide](in) + ADP + phosphate + H(+). The catalysed reaction is L-alanyl-gamma-D-glutamyl-meso-2,6-diaminopimelate(out) + ATP + H2O = L-alanyl-gamma-D-glutamyl-meso-2,6-diaminopimelate(in) + ADP + phosphate + H(+). Functionally, part of the ABC transporter complex OppABCDF involved in the uptake of oligopeptides and of the ABC transporter complex MppA-OppBCDF involved in the uptake of the cell wall murein tripeptide L-alanyl-gamma-D-glutamyl-meso-diaminopimelate. Probably responsible for energy coupling to the transport system. Plays an important nutritional role and is involved in the recycling of cell wall peptides. The protein is Oligopeptide transport ATP-binding protein OppF (oppF) of Escherichia coli (strain K12).